The primary structure comprises 330 residues: MGRDYYIFSNGRIKRKENTIYFEDFEGNKKGLPIEDIERLHIFGEVDLNTKFLNYISRYSVLISIYNYYGFYSGSYYSKKKNVSGVLLVNQALAYDNYEFRVAIAKTFIDSAMHHILRNLRRYKEKTSEFVKAIENERKIMKEAKTIEEVMGAEGRARKKYYESYNAFLKFLKNDFHFNKREKKPPNDPINALISFGNSMMYTTVLGEIYKTQLDPTISYLHEPSTKRFSLSLDLAEIFKPLIVDSVIFNMINKGMIKKSDFDTDEGICYLNENGRKKFIKEYENKLSTTVRHRTLNRNVSYRELIRLECYKLIKMLLGDEDYKPLKAWW.

Mn(2+) is bound by residues Glu-154, His-222, and Glu-237.

It belongs to the CRISPR-associated endonuclease Cas1 family. Homodimer, forms a heterotetramer with a Cas2 homodimer. The cofactor is Mg(2+). It depends on Mn(2+) as a cofactor.

In terms of biological role, CRISPR (clustered regularly interspaced short palindromic repeat), is an adaptive immune system that provides protection against mobile genetic elements (viruses, transposable elements and conjugative plasmids). CRISPR clusters contain spacers, sequences complementary to antecedent mobile elements, and target invading nucleic acids. CRISPR clusters are transcribed and processed into CRISPR RNA (crRNA). Acts as a dsDNA endonuclease. Involved in the integration of spacer DNA into the CRISPR cassette. The polypeptide is CRISPR-associated endonuclease Cas1 (Clostridium perfringens (strain SM101 / Type A)).